The chain runs to 65 residues: Large ribosomal subunit protein bL35 (65 aa).

This sequence belongs to the bacterial ribosomal protein bL35 family.

In Alkalilimnicola ehrlichii (strain ATCC BAA-1101 / DSM 17681 / MLHE-1), this protein is Large ribosomal subunit protein bL35.